Consider the following 385-residue polypeptide: Isocitrate dehydrogenase [NAD] subunit beta, mitochondrial (385 aa).

Residues 1–33 constitute a mitochondrion transit peptide; that stretch reads MAALSRVRWLTRALVAAPNPGAWRSLCTSTVAQ. Position 199 is an N6-acetyllysine (Lys199).

The protein belongs to the isocitrate and isopropylmalate dehydrogenases family. As to quaternary structure, heterooligomer of subunits alpha (IDH3A), beta (IDH3B), and gamma (IDH3G) in the apparent ratio of 2:1:1. The heterodimer containing one IDH3A and one IDH3B subunit and the heterodimer containing one IDH3A and one IDH3G subunit assemble into a heterotetramer (which contains two subunits of IDH3A, one of IDH3B and one of IDH3G) and further into the heterooctamer. As to expression, isoform A is predominant in heart muscle; also found in brain, kidney and liver. Isoform B is present in kidney and liver.

It localises to the mitochondrion. Its activity is regulated as follows. The heterotetramer and the heterodimer composed of IDH3A and IDH3G subunits can be allosterically activated by citrate (CIT) or/and ADP, and the two activators can act independently or synergistically. The heterodimer composed of IDH3A and IDH3B subunits cannot be allosterically regulated and the allosteric regulation of the heterotetramer is through the IDH3G subunit and not the IDH3B subunit. The IDH3G subunit contains the allosteric site which consists of a CIT-binding site and an ADP-binding site, and the binding of CIT and ADP causes conformational changes at the allosteric site which are transmitted to the active site in the catalytic subunit (IDH3A) through a cascade of conformational changes at the heterodimer interface, leading to stabilization of the isocitrate-binding at the active site and thus activation of the enzyme. ATP can activate the heterotetramer and the heterodimer composed of IDH3A and IDH3G subunits at low concentrations but inhibits their activities at high concentrations, whereas ATP exhibits only inhibitory effect on the heterodimer composed of IDH3A and IDH3B subunits. In terms of biological role, plays a structural role to facilitate the assembly and ensure the full activity of the enzyme catalyzing the decarboxylation of isocitrate (ICT) into alpha-ketoglutarate. The heterodimer composed of the alpha (IDH3A) and beta (IDH3B) subunits and the heterodimer composed of the alpha (IDH3A) and gamma (IDH3G) subunits, have considerable basal activity but the full activity of the heterotetramer (containing two subunits of IDH3A, one of IDH3B and one of IDH3G) requires the assembly and cooperative function of both heterodimers. This is Isocitrate dehydrogenase [NAD] subunit beta, mitochondrial (IDH3B) from Bos taurus (Bovine).